The following is a 350-amino-acid chain: Nicotinate-nucleotide--dimethylbenzimidazole phosphoribosyltransferase (350 aa).

Glu-318 acts as the Proton acceptor in catalysis.

Belongs to the CobT family.

It catalyses the reaction 5,6-dimethylbenzimidazole + nicotinate beta-D-ribonucleotide = alpha-ribazole 5'-phosphate + nicotinate + H(+). Its pathway is nucleoside biosynthesis; alpha-ribazole biosynthesis; alpha-ribazole from 5,6-dimethylbenzimidazole: step 1/2. Its function is as follows. Catalyzes the synthesis of alpha-ribazole-5'-phosphate from nicotinate mononucleotide (NAMN) and 5,6-dimethylbenzimidazole (DMB). The polypeptide is Nicotinate-nucleotide--dimethylbenzimidazole phosphoribosyltransferase (Citrifermentans bemidjiense (strain ATCC BAA-1014 / DSM 16622 / JCM 12645 / Bem) (Geobacter bemidjiensis)).